The chain runs to 316 residues: Beta-galactosidase small subunit (316 aa).

This sequence belongs to the bacterial beta-galactosidase small subunit family. Heterodimer of a large (LacL) and a small subunit (LacM).

The enzyme catalyses Hydrolysis of terminal non-reducing beta-D-galactose residues in beta-D-galactosides.. Its function is as follows. Component of a beta-galactosidase. The polypeptide is Beta-galactosidase small subunit (lacM) (Lactobacillus acidophilus (strain ATCC 700396 / NCK56 / N2 / NCFM)).